A 443-amino-acid polypeptide reads, in one-letter code: Na(+)-translocating NADH-quinone reductase subunit A (443 aa).

Belongs to the NqrA family. Composed of six subunits; NqrA, NqrB, NqrC, NqrD, NqrE and NqrF.

It catalyses the reaction a ubiquinone + n Na(+)(in) + NADH + H(+) = a ubiquinol + n Na(+)(out) + NAD(+). NQR complex catalyzes the reduction of ubiquinone-1 to ubiquinol by two successive reactions, coupled with the transport of Na(+) ions from the cytoplasm to the periplasm. NqrA to NqrE are probably involved in the second step, the conversion of ubisemiquinone to ubiquinol. This chain is Na(+)-translocating NADH-quinone reductase subunit A, found in Mannheimia succiniciproducens (strain KCTC 0769BP / MBEL55E).